Here is a 97-residue protein sequence, read N- to C-terminus: MKVQVDEELMRKLEKLALISLTDQERQEFMRDLTKILDFFNKIDELNLEGVEPMFHPLSTGKLRPDEPAQPLSRDDALANVPKKKDGYIIGPSTIGG.

The segment at 59–78 (STGKLRPDEPAQPLSRDDAL) is disordered. A compositionally biased stretch (basic and acidic residues) spans 63–78 (LRPDEPAQPLSRDDAL).

Belongs to the GatC family. As to quaternary structure, heterotrimer of A, B and C subunits.

It catalyses the reaction L-glutamyl-tRNA(Gln) + L-glutamine + ATP + H2O = L-glutaminyl-tRNA(Gln) + L-glutamate + ADP + phosphate + H(+). The catalysed reaction is L-aspartyl-tRNA(Asn) + L-glutamine + ATP + H2O = L-asparaginyl-tRNA(Asn) + L-glutamate + ADP + phosphate + 2 H(+). Functionally, allows the formation of correctly charged Asn-tRNA(Asn) or Gln-tRNA(Gln) through the transamidation of misacylated Asp-tRNA(Asn) or Glu-tRNA(Gln) in organisms which lack either or both of asparaginyl-tRNA or glutaminyl-tRNA synthetases. The reaction takes place in the presence of glutamine and ATP through an activated phospho-Asp-tRNA(Asn) or phospho-Glu-tRNA(Gln). The protein is Aspartyl/glutamyl-tRNA(Asn/Gln) amidotransferase subunit C of Metallosphaera sedula (strain ATCC 51363 / DSM 5348 / JCM 9185 / NBRC 15509 / TH2).